The following is a 235-amino-acid chain: Phosphoribosylaminoimidazole-succinocarboxamide synthase (235 aa).

Belongs to the SAICAR synthetase family.

It catalyses the reaction 5-amino-1-(5-phospho-D-ribosyl)imidazole-4-carboxylate + L-aspartate + ATP = (2S)-2-[5-amino-1-(5-phospho-beta-D-ribosyl)imidazole-4-carboxamido]succinate + ADP + phosphate + 2 H(+). Its pathway is purine metabolism; IMP biosynthesis via de novo pathway; 5-amino-1-(5-phospho-D-ribosyl)imidazole-4-carboxamide from 5-amino-1-(5-phospho-D-ribosyl)imidazole-4-carboxylate: step 1/2. This is Phosphoribosylaminoimidazole-succinocarboxamide synthase from Streptococcus agalactiae serotype Ia (strain ATCC 27591 / A909 / CDC SS700).